The following is a 239-amino-acid chain: Small ribosomal subunit protein uS2 (239 aa).

This sequence belongs to the universal ribosomal protein uS2 family.

The chain is Small ribosomal subunit protein uS2 from Francisella tularensis subsp. tularensis (strain WY96-3418).